The chain runs to 215 residues: Cytochrome b6 (215 aa).

A helical membrane pass occupies residues 32–52; the sequence is IFYCLGGITLTCFLVQVATGF. A heme c-binding site is contributed by cysteine 35. 2 residues coordinate heme b: histidine 86 and histidine 100. The next 3 helical transmembrane spans lie at 90 to 110, 116 to 136, and 186 to 206; these read ASMMVLMMILHVFRVYLTGGF, LTWVTGVVLAVLTASFGVTGY, and LHTFVLPLVSAVFMLIHFLMI. Heme b contacts are provided by histidine 187 and histidine 202.

The protein belongs to the cytochrome b family. PetB subfamily. As to quaternary structure, the 4 large subunits of the cytochrome b6-f complex are cytochrome b6, subunit IV (17 kDa polypeptide, PetD), cytochrome f and the Rieske protein, while the 4 small subunits are PetG, PetL, PetM and PetN. The complex functions as a dimer. The cofactor is heme b. Heme c serves as cofactor.

The protein localises to the plastid. The protein resides in the chloroplast thylakoid membrane. Component of the cytochrome b6-f complex, which mediates electron transfer between photosystem II (PSII) and photosystem I (PSI), cyclic electron flow around PSI, and state transitions. The protein is Cytochrome b6 of Pelargonium hortorum (Common geranium).